The primary structure comprises 72 residues: Conotoxin LvVIA (72 aa).

A signal peptide spans 1–17 (VLIIAVLFLTASELVTA). Residues 18-41 (DYTRDKWQYRAASLRDAMRNFRDT) constitute a propeptide that is removed on maturation. 3 cysteine pairs are disulfide-bonded: Cys44–Cys58, Cys51–Cys63, and Cys57–Cys70.

This sequence belongs to the conotoxin O1 superfamily. Expressed by the venom duct.

It localises to the secreted. The sequence is that of Conotoxin LvVIA from Conus lividus (Livid cone).